A 349-amino-acid chain; its full sequence is T-cell immunoglobulin and mucin domain-containing protein 2 (349 aa).

A signal peptide spans 1–20 (MVQLQVFISGLLLLLPGAVA). The Extracellular portion of the chain corresponds to 21-275 (SYTVVQGHSV…QKLQRNPTKG (255 aa)). The region spanning 22-123 (YTVVQGHSVT…AFYFVDYLLE (102 aa)) is the Ig-like V-type domain. 3 disulfide bridges follow: Cys-34–Cys-107, Cys-48–Cys-59, and Cys-54–Cys-106. N-linked (GlcNAc...) asparagine glycosylation is found at Asn-84 and Asn-89. The tract at residues 128–271 (LPTSPPTRPT…AIPPQKLQRN (144 aa)) is disordered. Over residues 136 to 215 (PTNTGRPTTT…TSTPPTPEQT (80 aa)) the composition is skewed to low complexity. Positions 222 to 260 (ATTYYPDQTTAEVTEAPSHTPTDWNNTATSSDDSWNSDT) are enriched in polar residues. A helical membrane pass occupies residues 276 to 296 (FYVGMSFAALLLLLLASTVAI). Residues 297–349 (TRYMVMRKNSGSLRFVAFPVSKIGASQNKVVEQARIEDEVYIIEDSPYFEEES) lie on the Cytoplasmic side of the membrane.

Belongs to the immunoglobulin superfamily. TIM family. As to quaternary structure, homodimer.

It is found in the cell membrane. Functionally, probable receptor for SEMA4A involved in the regulation of T-cell function. The interaction with SEMA4A enhances T-cell activation. This chain is T-cell immunoglobulin and mucin domain-containing protein 2 (Timd2), found in Rattus norvegicus (Rat).